The chain runs to 875 residues: Alanine--tRNA ligase (875 aa).

Zn(2+) contacts are provided by histidine 563, histidine 567, cysteine 665, and histidine 669.

Belongs to the class-II aminoacyl-tRNA synthetase family. The cofactor is Zn(2+).

The protein localises to the cytoplasm. The catalysed reaction is tRNA(Ala) + L-alanine + ATP = L-alanyl-tRNA(Ala) + AMP + diphosphate. Functionally, catalyzes the attachment of alanine to tRNA(Ala) in a two-step reaction: alanine is first activated by ATP to form Ala-AMP and then transferred to the acceptor end of tRNA(Ala). Also edits incorrectly charged Ser-tRNA(Ala) and Gly-tRNA(Ala) via its editing domain. This Desulfitobacterium hafniense (strain Y51) protein is Alanine--tRNA ligase.